The following is a 259-amino-acid chain: Dickkopf-related protein 2 (259 aa).

Residues 1 to 33 (MAALMRVKDSSRCLLLLAAVLMVESSQLGSSRA) form the signal peptide. The interval 42–70 (LGGETPAQSANRSAGMNQGLAFGGSKKGK) is disordered. Residues 47-57 (PAQSANRSAGM) show a composition bias toward polar residues. N-linked (GlcNAc...) asparagine glycosylation is present at N52. Residues 78-127 (CSSDKECEVGRYCHSPHQGSSACMLCRRKKKRCHRDGMCCPGTRCNNGIC) form a DKK-type Cys-1 region. Intrachain disulfides connect C183–C195, C189–C204, C194–C231, C214–C239, and C233–C256. The tract at residues 183-256 (CLRSSDCIDG…YSSKARLHVC (74 aa)) is DKK-type Cys-2.

The protein belongs to the dickkopf family. As to quaternary structure, interacts with LRP5 and LRP6. In terms of processing, may be proteolytically processed by a furin-like protease.

The protein resides in the secreted. Its function is as follows. Antagonizes canonical Wnt signaling by inhibiting LRP5/6 interaction with Wnt and by forming a ternary complex with the transmembrane protein KREMEN that promotes internalization of LRP5/6. DKKs play an important role in vertebrate development, where they locally inhibit Wnt regulated processes such as antero-posterior axial patterning, limb development, somitogenesis and eye formation. In the adult, Dkks are implicated in bone formation and bone disease, cancer and Alzheimer disease. The sequence is that of Dickkopf-related protein 2 from Mus musculus (Mouse).